A 119-amino-acid chain; its full sequence is Large ribosomal subunit protein bL20 (119 aa).

The protein belongs to the bacterial ribosomal protein bL20 family.

Binds directly to 23S ribosomal RNA and is necessary for the in vitro assembly process of the 50S ribosomal subunit. It is not involved in the protein synthesizing functions of that subunit. This Teredinibacter turnerae (strain ATCC 39867 / T7901) protein is Large ribosomal subunit protein bL20.